The following is a 141-amino-acid chain: Protein X (141 aa).

Residues Q24 to S48 show a composition bias toward low complexity. The segment at Q24 to D52 is disordered. The segment at P68–L113 is mitochondrial targeting sequence.

It belongs to the orthohepadnavirus protein X family. In terms of assembly, may form homodimer. May interact with host CEBPA, CFLAR, CREB1, DDB1, E4F1, HBXIP, HSPD1/HSP60, NFKBIA, POLR2E and SMAD4. Interacts with host SMC5-SMC6 complex and induces its degradation. Interacts with host TRPC4AP; leading to prevent ubiquitination of TRPC4AP. Interacts with host PLSCR1; this interaction promotes ubiquitination and degradation of HBx and impairs HBx-mediated cell proliferation. A fraction may be phosphorylated in insect cells and HepG2 cells, a human hepatoblastoma cell line. Phosphorylated in vitro by host protein kinase C or mitogen-activated protein kinase. N-acetylated in insect cells.

It localises to the host cytoplasm. The protein localises to the host nucleus. The protein resides in the host mitochondrion. Multifunctional protein that plays a role in silencing host antiviral defenses and promoting viral transcription. Does not seem to be essential for HBV infection. May be directly involved in development of cirrhosis and liver cancer (hepatocellular carcinoma). Most of cytosolic activities involve modulation of cytosolic calcium. The effect on apoptosis is controversial depending on the cell types in which the studies have been conducted. May induce apoptosis by localizing in mitochondria and causing loss of mitochondrial membrane potential. May also modulate apoptosis by binding host CFLAR, a key regulator of the death-inducing signaling complex (DISC). Promotes viral transcription by using the host E3 ubiquitin ligase DDB1 to target the SMC5-SMC6 complex to proteasomal degradation. This host complex would otherwise bind to viral episomal DNA, and prevents its transcription. Moderately stimulates transcription of many different viral and cellular transcription elements. Promoters and enhancers stimulated by HBx contain DNA binding sites for NF-kappa-B, AP-1, AP-2, c-EBP, ATF/CREB, or the calcium-activated factor NF-AT. The chain is Protein X from Woodchuck hepatitis B virus (isolate 7) (WHV).